The chain runs to 490 residues: Cytochrome P450 2C6 (490 aa).

N6-acetyllysine occurs at positions 249 and 375. Position 435 (cysteine 435) interacts with heme.

This sequence belongs to the cytochrome P450 family. It depends on heme as a cofactor.

The protein resides in the endoplasmic reticulum membrane. It is found in the microsome membrane. The catalysed reaction is an organic molecule + reduced [NADPH--hemoprotein reductase] + O2 = an alcohol + oxidized [NADPH--hemoprotein reductase] + H2O + H(+). Functionally, cytochromes P450 are a group of heme-thiolate monooxygenases. In liver microsomes, this enzyme is involved in an NADPH-dependent electron transport pathway. It oxidizes a variety of structurally unrelated compounds, including steroids, fatty acids, and xenobiotics. The polypeptide is Cytochrome P450 2C6 (Cyp2c6) (Rattus norvegicus (Rat)).